The following is a 112-amino-acid chain: Ribosome-binding factor A (112 aa).

Belongs to the RbfA family. Monomer. Binds 30S ribosomal subunits, but not 50S ribosomal subunits or 70S ribosomes.

Its subcellular location is the cytoplasm. Its function is as follows. One of several proteins that assist in the late maturation steps of the functional core of the 30S ribosomal subunit. Associates with free 30S ribosomal subunits (but not with 30S subunits that are part of 70S ribosomes or polysomes). Required for efficient processing of 16S rRNA. May interact with the 5'-terminal helix region of 16S rRNA. This is Ribosome-binding factor A from Mycoplasmopsis pulmonis (strain UAB CTIP) (Mycoplasma pulmonis).